The sequence spans 354 residues: MSKTILFTGGGTAGHVMINIVLIPKFIEKGWRVEYIGSKNGIEKSLVQNVKYNSVSTGKLRRYWDWDNFKDPFKIIRGCLQSYNLIKKTKPDVIFSAGGFVSVPVAIGAWLNRVPIIIREPDSTLGLANKIALPFATKLCTTFPQTGENVSNEKKVYVGPIVRVEIEKGNVLRGRRYCEFQQDKPVLLIMGGSQGAKWINDMVRECLDTILLNFNIIHICGKGKVDPSIGMEGYMQFEYIGDELPHILNMASVVVSRAGSTAISELLFLKKPMLLIPLTNSSSRGDQVLNAEYFSRQGYAEVILQDRVSTNTFIHAVNKLYTNKEKYIQNMNGYKKTNDEGIHQIIDIINEVVK.

UDP-N-acetyl-alpha-D-glucosamine is bound by residues 12–14 (TAG), R163, S193, and Q287.

The protein belongs to the glycosyltransferase 28 family. MurG subfamily.

The protein resides in the cell membrane. It catalyses the reaction di-trans,octa-cis-undecaprenyl diphospho-N-acetyl-alpha-D-muramoyl-L-alanyl-D-glutamyl-meso-2,6-diaminopimeloyl-D-alanyl-D-alanine + UDP-N-acetyl-alpha-D-glucosamine = di-trans,octa-cis-undecaprenyl diphospho-[N-acetyl-alpha-D-glucosaminyl-(1-&gt;4)]-N-acetyl-alpha-D-muramoyl-L-alanyl-D-glutamyl-meso-2,6-diaminopimeloyl-D-alanyl-D-alanine + UDP + H(+). Its pathway is cell wall biogenesis; peptidoglycan biosynthesis. Its function is as follows. Cell wall formation. Catalyzes the transfer of a GlcNAc subunit on undecaprenyl-pyrophosphoryl-MurNAc-pentapeptide (lipid intermediate I) to form undecaprenyl-pyrophosphoryl-MurNAc-(pentapeptide)GlcNAc (lipid intermediate II). This chain is UDP-N-acetylglucosamine--N-acetylmuramyl-(pentapeptide) pyrophosphoryl-undecaprenol N-acetylglucosamine transferase 3, found in Bacillus cereus (strain ATCC 14579 / DSM 31 / CCUG 7414 / JCM 2152 / NBRC 15305 / NCIMB 9373 / NCTC 2599 / NRRL B-3711).